Reading from the N-terminus, the 616-residue chain is Secretogranin-2 (616 aa).

A signal peptide spans Met-1 to Ala-27. Residues Ala-28 to Phe-30 constitute a propeptide that is removed on maturation. Disordered regions lie at residues Gln-68 to Leu-104 and Ala-120 to Met-146. A compositionally biased stretch (basic and acidic residues) spans Glu-92 to Leu-104. A compositionally biased stretch (polar residues) spans Asn-122 to Lys-140. Tyr-150 is subject to Sulfotyrosine. A phosphoserine mark is found at Ser-173, Ser-267, Ser-431, Ser-531, Ser-554, and Ser-555. Positions Lys-255–Arg-283 are enriched in basic and acidic residues. The interval Lys-255–Gln-290 is disordered. Residues Glu-548–Lys-560 show a composition bias toward basic and acidic residues. Residues Glu-548–Gln-582 form a disordered region.

This sequence belongs to the chromogranin/secretogranin protein family. In terms of assembly, interacts with Secretogranin III/SCG3.

The protein resides in the secreted. Functionally, neuroendocrine protein of the granin family that regulates the biogenesis of secretory granules. This is Secretogranin-2 (SCG2) from Sus scrofa (Pig).